Reading from the N-terminus, the 246-residue chain is mRNA-decapping protein g5R (246 aa).

The region spanning 93 to 239 (QKFRKNWLLP…IIGPAFNFIK (147 aa)) is the Nudix hydrolase domain. The short motif at 128–149 (GKPKEDESDLTCAIREFEEETG) is the Nudix box element. E134 lines the Mg(2+) pocket. E143 functions as the Nucleophile in the catalytic mechanism. Residues E147 and D169 each contribute to the Mg(2+) site.

This sequence belongs to the Nudix hydrolase family. DIPP subfamily. In terms of assembly, interacts with host RPL23A. It depends on Mg(2+) as a cofactor. Requires Mn(2+) as cofactor.

It is found in the host rough endoplasmic reticulum. It carries out the reaction diphospho-myo-inositol polyphosphate + H2O = myo-inositol polyphosphate + phosphate.. Its function is as follows. Decapping enzyme required for the removal of the 5'-end m7GpppN cap tethered to viral and host mRNAs to allow their decay in cells. May therefore accelerate viral and cellular mRNA turnover to eliminate competing host mRNAs and allow stage-specific synthesis of viral proteins. Acceleration of the turnover of cellular transcripts may even promote the shutoff of host protein synthesis. In addition to the mRNA cap, g5R also efficiently hydrolyzes diphosphoinositol polyphosphates. Down-regulation of the level of PP-InsP5 (diphosphoinositol pentakisphosphate) may play a role in viral manipulation of the cellular secretory pathway, a step necessary for the formation of virions. Binds viral and cellular poly(A) mRNAs, thereby decreasing both types of mRNAs. The sequence is that of mRNA-decapping protein g5R from African swine fever virus (isolate Warthog/Namibia/Wart80/1980) (ASFV).